A 340-amino-acid chain; its full sequence is Heat-inducible transcription repressor HrcA (340 aa).

It belongs to the HrcA family.

Functionally, negative regulator of class I heat shock genes (grpE-dnaK-dnaJ and groELS operons). Prevents heat-shock induction of these operons. This chain is Heat-inducible transcription repressor HrcA, found in Burkholderia vietnamiensis (strain G4 / LMG 22486) (Burkholderia cepacia (strain R1808)).